A 2158-amino-acid chain; its full sequence is Non-reducing polyketide synthase Preu8 (2158 aa).

Residues 4–241 (LVLGDQVADH…TPIPVFAPYH (238 aa)) are N-terminal acylcarrier protein transacylase domain (SAT). The Ketosynthase family 3 (KS3) domain occupies 369–801 (NDKIAIVGMS…GGNTAIILED (433 aa)). Residues Cys-541, His-676, and His-719 each act as for beta-ketoacyl synthase activity in the active site. A malonyl-CoA:ACP transacylase (MAT) domain region spans residues 900-1215 (FTFTGQGSQY…ANSVSTLFLA (316 aa)). Ser-989 (for acyl/malonyl transferase activity) is an active-site residue. A product template (PT) domain region spans residues 1285–1603 (SCQRIVREEL…RRVLNIMMPP (319 aa)). The interval 1287–1423 (QRIVREELHA…GTVKYEDVSQ (137 aa)) is N-terminal hotdog fold. Residues 1287–1598 (QRIVREELHA…FQNIARRVLN (312 aa)) enclose the PKS/mFAS DH domain. The active-site Proton acceptor; for dehydratase activity is His-1319. The C-terminal hotdog fold stretch occupies residues 1451–1598 (AHKVLRGMAY…FQNIARRVLN (148 aa)). Asp-1511 (proton donor; for dehydratase activity) is an active-site residue. Low complexity predominate over residues 1619–1639 (KKAASPTLAPAKAAKPAAKTS). The disordered stretch occupies residues 1619-1654 (KKAASPTLAPAKAAKPAAKTSKPSKARAKPAADSTT). The Carrier 1 domain maps to 1651 to 1725 (DSTTSRVMKI…QMKKFFSQYD (75 aa)). Ser-1685 carries the post-translational modification O-(pantetheine 4'-phosphoryl)serine. A disordered region spans residues 1723–1779 (QYDGAPIPDDGDDSDGTDEPSNFSTPSYGADNASTPPSSAPSVNGKSSPENHEVLES). Residues 1731 to 1740 (DDGDDSDGTD) show a composition bias toward acidic residues. Residues 1743–1770 (SNFSTPSYGADNASTPPSSAPSVNGKSS) are compositionally biased toward polar residues. The Carrier 2 domain occupies 1779–1853 (STEVSLARKI…DIENELGMRP (75 aa)). Ser-1813 carries the post-translational modification O-(pantetheine 4'-phosphoryl)serine. The interval 1847–1879 (NELGMRPKPKPKAEAAPPKSSAKASPSANKQPQ) is disordered. Positions 1860–1876 (EAAPPKSSAKASPSANK) are enriched in low complexity. The segment at 1894 to 2144 (SQYPPANSVL…NHFTMMKGDH (251 aa)) is thioesterase (TE) domain.

Pantetheine 4'-phosphate is required as a cofactor.

Non-reducing polyketide synthase; part of a gene cluster that mediates the biosynthesis of a yet unidentified natural product. The chain is Non-reducing polyketide synthase Preu8 from Preussia isomera (Coprophilous fungus).